Here is a 178-residue protein sequence, read N- to C-terminus: FXYD domain-containing ion transport regulator 5 (178 aa).

Residues 1–21 form the signal peptide; that stretch reads MSPSGRLCLLTIVGLILPTRG. Topologically, residues 22-145 are extracellular; sequence QTLKDTTSSS…FYDEHTLRKR (124 aa). Residues 23 to 131 form a disordered region; that stretch reads TLKDTTSSSS…QTLKPSGFHE (109 aa). 2 stretches are compositionally biased toward low complexity: residues 26 to 36 and 68 to 77; these read DTTSSSSADST and TPQPQTQTQQ. Over residues 103–125 the composition is skewed to polar residues; the sequence is DTTTLSERPSPSTDVQTDPQTLK. The helical transmembrane segment at 146–164 threads the bilayer; that stretch reads GLLVAAVLFITGIIILTSG. Over 165 to 178 the chain is Cytoplasmic; sequence KCRQLSRLCRNRCR.

This sequence belongs to the FXYD family. Regulatory subunit of the sodium/potassium-transporting ATPase which is composed of a catalytic alpha subunit, a non-catalytic beta subunit and an additional regulatory subunit. The regulatory subunit, a member of the FXYD protein family, modulates the enzymatic activity in a tissue- and isoform-specific way by changing affinities of the Na+/K+-ATPase toward Na(+), K(+) or ATP. Post-translationally, glycosylated.

It is found in the cell membrane. The protein resides in the basolateral cell membrane. Its function is as follows. Associates with and regulates the activity of the sodium/potassium-transporting ATPase (NKA) which catalyzes the hydrolysis of ATP coupled with the exchange of Na(+) and K(+) ions across the plasma membrane. May increase NKA activity by increasing the apparent affinity for Na(+). Involved in down-regulation of E-cadherin which results in reduced cell adhesion. Promotes metastasis. The protein is FXYD domain-containing ion transport regulator 5 (FXYD5) of Homo sapiens (Human).